The chain runs to 206 residues: GTP-binding protein YPTC5 (206 aa).

Gly-15–Thr-22 contacts GTP. Residues Tyr-37–Phe-45 carry the Effector region motif. GTP contacts are provided by residues Asp-63–Gln-67 and Asn-125–Asp-128. S-geranylgeranyl cysteine attachment occurs at residues Cys-205 and Cys-206.

The protein belongs to the small GTPase superfamily. Rab family.

The protein localises to the cell membrane. Protein transport. Probably involved in vesicular traffic. The polypeptide is GTP-binding protein YPTC5 (YPTC5) (Chlamydomonas reinhardtii (Chlamydomonas smithii)).